We begin with the raw amino-acid sequence, 278 residues long: Cytoplasmic envelopment protein 1 (278 aa).

The protein belongs to the herpesviridae cytoplasmic envelopment protein 1 family. In terms of assembly, interacts with BSRF1 tegument protein; the BBRF2-BSRF1 complexes oligomerize and might play a role in tethering the viral nucleocapsids to the host Golgi membrane during secondary envelopment.

Its subcellular location is the virion. It localises to the virion tegument. The protein resides in the host cytoplasm. It is found in the host Golgi apparatus. Its function is as follows. Plays a critical role in cytoplasmic virus egress. Participates in the final step of tegumentation and envelope acquisition within the host cytoplasm. The polypeptide is Cytoplasmic envelopment protein 1 (Homo sapiens (Human)).